Consider the following 792-residue polypeptide: Xaa-Pro dipeptidyl-peptidase (792 aa).

Catalysis depends on charge relay system residues S363, D482, and H513.

It belongs to the peptidase S15 family. As to quaternary structure, homodimer.

It localises to the cytoplasm. It catalyses the reaction Hydrolyzes Xaa-Pro-|- bonds to release unblocked, N-terminal dipeptides from substrates including Ala-Pro-|-p-nitroanilide and (sequentially) Tyr-Pro-|-Phe-Pro-|-Gly-Pro-|-Ile.. Removes N-terminal dipeptides sequentially from polypeptides having unsubstituted N-termini provided that the penultimate residue is proline. In Lactobacillus delbrueckii subsp. lactis, this protein is Xaa-Pro dipeptidyl-peptidase (pepX).